The chain runs to 317 residues: MTQRFGKVGVLYGGRSAEREVSLMSGAGVHEALRSAGVDAHLFDTGLQDLTALEAAGFERVFIALHGRFGEDGAIQGALELLNIPYTGSGVTASALAMDKIMTKRVWLQHGLPTPAFEEIDSDTELRRVPDRLGLPLILKPPHEGSTVGITKVAACADMEQAYAAASHFDEVVLAEQFVRGRELTVALLGSGRNARALPVIEIVAPDGNYDYQNKYFTDVTQYFCPADLPVGVAEQIEKIAVQAYRALGCEGWGRADFILDGQNQPWLLEMNTSPGMTSHSLVPMAARAVGMSYAELCVAILADASCKLRAPARANG.

Positions 104–303 (KRVWLQHGLP…YAELCVAILA (200 aa)) constitute an ATP-grasp domain. ATP is bound at residue 130–185 (PDRLGLPLILKPPHEGSTVGITKVAACADMEQAYAAASHFDEVVLAEQFVRGRELT). Mg(2+) contacts are provided by Asp257, Glu270, and Asn272.

This sequence belongs to the D-alanine--D-alanine ligase family. Requires Mg(2+) as cofactor. Mn(2+) is required as a cofactor.

It localises to the cytoplasm. The catalysed reaction is 2 D-alanine + ATP = D-alanyl-D-alanine + ADP + phosphate + H(+). Its pathway is cell wall biogenesis; peptidoglycan biosynthesis. Functionally, cell wall formation. This chain is D-alanine--D-alanine ligase, found in Bordetella avium (strain 197N).